We begin with the raw amino-acid sequence, 188 residues long: Probable manganese efflux pump MntP (188 aa).

The next 6 helical transmembrane spans lie at 3–23 (YTAT…ASIG), 41–61 (LIFG…GILA), 66–86 (LEWN…RMII), 106–128 (WLLV…GLAF), 143–163 (ATLI…PMLG), and 168–188 (ILGG…HFHG).

The protein belongs to the MntP (TC 9.B.29) family.

The protein resides in the cell inner membrane. Functionally, probably functions as a manganese efflux pump. The polypeptide is Probable manganese efflux pump MntP (Salmonella heidelberg (strain SL476)).